The primary structure comprises 830 residues: Nucleolar complex-associated protein 3 (830 aa).

5 disordered regions span residues 1–22 (MGKN…DVAE), 67–86 (KYEE…GNGE), 112–169 (KSKL…EETP), 391–436 (GKPN…KIRD), and 802–830 (LQSE…KKQI). Coiled coils occupy residues 61-81 (VMTV…LQEE) and 111-156 (KKSK…HEKD). Positions 67-84 (KYEEERSKRKTLQEEKGN) are enriched in basic and acidic residues. Acidic residues predominate over residues 118-129 (AETDEAEKDVLE). Positions 130 to 140 (DEHVLNKSQRR) are enriched in basic and acidic residues. The Nuclear localization signal 1 signature appears at 138-145 (QRREKAKK). Positions 141-150 (EKAKKSKREA) are enriched in basic residues. The span at 159–168 (DEILQEEEET) shows a compositional bias: acidic residues. Positions 391–400 (GKPNKEDEHN) are enriched in basic and acidic residues. Positions 400–429 (NKKYKKNNKRKTQEEQNQVQENERKKSKKD) form a coiled coil. The Nuclear localization signal 2 signature appears at 408 to 415 (KRKTQEEQ). Residues 420 to 436 (ENERKKSKKDMMSKIRD) show a composition bias toward basic and acidic residues. The Nuclear localization signal 3 signature appears at 806-813 (EKKPLKKQ). Basic residues predominate over residues 817–830 (VKKKLKNPKSKKQI).

It belongs to the CBF/MAK21 family. In terms of assembly, component of nucleolar complexes. Interacts with RBL and NOC2 in both the nucleolus and nucleoplasm.

The protein resides in the nucleus. Its subcellular location is the nucleolus. It localises to the nucleoplasm. Functionally, may be required for synthesis of 60S ribosomal subunits and the transport of pre-ribosomes from the nucleoplasm to the cytoplasm. Also required for initiation of DNA replication. This is Nucleolar complex-associated protein 3 from Arabidopsis thaliana (Mouse-ear cress).